Reading from the N-terminus, the 434-residue chain is Serine hydroxymethyltransferase (434 aa).

Residue 120–122 (GHI) participates in (6S)-5,6,7,8-tetrahydrofolate binding. The residue at position 236 (K236) is an N6-(pyridoxal phosphate)lysine. (6S)-5,6,7,8-tetrahydrofolate is bound at residue E255.

Belongs to the SHMT family. Homodimer. Pyridoxal 5'-phosphate serves as cofactor.

The protein resides in the cytoplasm. The protein operates within amino-acid biosynthesis; glycine biosynthesis; glycine from L-serine: step 1/1. Functionally, catalyzes the reversible interconversion of serine and glycine with a modified folate serving as the one-carbon carrier. Also exhibits a pteridine-independent aldolase activity toward beta-hydroxyamino acids, producing glycine and aldehydes, via a retro-aldol mechanism. In Korarchaeum cryptofilum (strain OPF8), this protein is Serine hydroxymethyltransferase.